The primary structure comprises 157 residues: Universal stress protein Sll1654 (157 aa).

This sequence belongs to the universal stress protein A family.

This Synechocystis sp. (strain ATCC 27184 / PCC 6803 / Kazusa) protein is Universal stress protein Sll1654.